The primary structure comprises 1479 residues: Type VII secretion system protein EssC (1479 aa).

A required for substrate secretion, protein missing this segment is unstable region spans residues 1–189 (MHKLIIKYNK…ASSLIRLTQE (189 aa)). The Cytoplasmic segment spans residues 1–229 (MHKLIIKYNK…RPPQPIQKNN (229 aa)). The chain crosses the membrane as a helical span at residues 230-252 (TVIWRSIIPPLVMIALTVVIFLV). The Extracellular portion of the chain corresponds to 253–256 (RPIG). Residues 257–279 (IYILMMIGMSTVTIVFGITTYFS) form a helical membrane-spanning segment. Topologically, residues 280–1479 (EKKKYNKDVE…QAYQKIRWFK (1200 aa)) are cytoplasmic. FtsK domains lie at 652–846 (DDIL…QDSN) and 997–1183 (QGPM…SEVS). ATP-binding positions include 672–679 (GTTGSGKS) and 1014–1021 (GSPGYGRT). A required for substrate secretion, truncated protein is stable region spans residues 1249 to 1479 (MMPDEIKYED…QAYQKIRWFK (231 aa)).

Belongs to the EssC family. In terms of assembly, homooligomer. Interacts with EsaE.

Its subcellular location is the cell membrane. In terms of biological role, component of the type VII secretion system (Ess). Required for the secretion of substrates including EsxA and EsxB. However, unable to support secretion of the substrate protein EsxC. This Staphylococcus aureus (strain NCTC 8325 / PS 47) protein is Type VII secretion system protein EssC.